The following is a 192-amino-acid chain: PTS-dependent dihydroxyacetone kinase, ADP-binding subunit DhaL (192 aa).

One can recognise a DhaL domain in the interval 5 to 189; that stretch reads DTTIEWLGKF…SAYLFETLLE (185 aa). Asp29, Asp34, and Asp36 together coordinate Mg(2+). ADP is bound by residues 37–40, 78–79, Gly115, Met124, Arg161, and 174–176; these read HGAN, AS, and DPG.

In terms of assembly, homodimer. The dihydroxyacetone kinase complex is composed of a homodimer of DhaM, a homodimer of DhaK and the subunit DhaL. Mg(2+) serves as cofactor.

Its subcellular location is the cytoplasm. It catalyses the reaction dihydroxyacetone + phosphoenolpyruvate = dihydroxyacetone phosphate + pyruvate. Its pathway is polyol metabolism; glycerol degradation. Its function is as follows. ADP-binding subunit of the dihydroxyacetone kinase, which is responsible for the phosphoenolpyruvate (PEP)-dependent phosphorylation of dihydroxyacetone. DhaL-ADP is converted to DhaL-ATP via a phosphoryl group transfer from DhaM and transmits it to dihydroxyacetone binds to DhaK. This is PTS-dependent dihydroxyacetone kinase, ADP-binding subunit DhaL from Lactococcus lactis subsp. lactis (strain IL1403) (Streptococcus lactis).